The sequence spans 448 residues: T-box transcription factor T homolog 1 (448 aa).

The segment at residues L54–D224 is a DNA-binding region (T-box). Disordered stretches follow at residues A290–S312 and T401–L448. Residues S417–P442 are compositionally biased toward polar residues.

It localises to the nucleus. Functionally, involved in the transcriptional regulation of genes required for mesoderm formation and differentiation. This is T-box transcription factor T homolog 1 from Branchiostoma floridae (Florida lancelet).